The sequence spans 351 residues: Putative ABC transporter permease protein MJ0876 (351 aa).

The next 9 membrane-spanning stretches (helical) occupy residues 4–24, 59–79, 99–119, 124–144, 152–172, 196–216, 249–269, 284–304, and 322–342; these read VGIL…ALYL, LPPI…GLML, VLMV…FEIF, ILVA…IIAL, VIIV…YLIA, GDVI…MFLI, FITG…IIAP, LVPA…ILSL, and PLPI…YLVY.

This sequence belongs to the binding-protein-dependent transport system permease family. FecCD subfamily.

Its subcellular location is the cell membrane. Functionally, probably part of a binding-protein-dependent transport system. Probably responsible for the translocation of the substrate across the membrane. In Methanocaldococcus jannaschii (strain ATCC 43067 / DSM 2661 / JAL-1 / JCM 10045 / NBRC 100440) (Methanococcus jannaschii), this protein is Putative ABC transporter permease protein MJ0876.